Reading from the N-terminus, the 100-residue chain is uncharacterized protein (100 aa).

The next 2 helical transmembrane spans lie at 30–50 (FHIP…PLAF) and 69–89 (FLLI…LPFF).

The protein localises to the cytoplasm. Its subcellular location is the nucleus membrane. This is an uncharacterized protein from Schizosaccharomyces pombe (strain 972 / ATCC 24843) (Fission yeast).